The primary structure comprises 443 residues: D-inositol 3-phosphate glycosyltransferase (443 aa).

Residue histidine 30 participates in 1D-myo-inositol 3-phosphate binding. Residues 36–37 (QP) and glycine 44 each bind UDP-N-acetyl-alpha-D-glucosamine. 1D-myo-inositol 3-phosphate contacts are provided by residues 41–46 (DAGGMN), lysine 99, tyrosine 132, threonine 156, and arginine 176. Positions 250, 255, and 316 each coordinate UDP-N-acetyl-alpha-D-glucosamine. Positions 325, 326, and 328 each coordinate Mg(2+). 2 residues coordinate UDP-N-acetyl-alpha-D-glucosamine: glutamate 338 and glutamate 346. Threonine 352 is a Mg(2+) binding site.

It belongs to the glycosyltransferase group 1 family. MshA subfamily. In terms of assembly, homodimer.

The catalysed reaction is 1D-myo-inositol 3-phosphate + UDP-N-acetyl-alpha-D-glucosamine = 1D-myo-inositol 2-acetamido-2-deoxy-alpha-D-glucopyranoside 3-phosphate + UDP + H(+). In terms of biological role, catalyzes the transfer of a N-acetyl-glucosamine moiety to 1D-myo-inositol 3-phosphate to produce 1D-myo-inositol 2-acetamido-2-deoxy-glucopyranoside 3-phosphate in the mycothiol biosynthesis pathway. This chain is D-inositol 3-phosphate glycosyltransferase, found in Stackebrandtia nassauensis (strain DSM 44728 / CIP 108903 / NRRL B-16338 / NBRC 102104 / LLR-40K-21).